Here is a 139-residue protein sequence, read N- to C-terminus: Putative nickel-responsive regulator (139 aa).

Ni(2+)-binding residues include histidine 77, histidine 88, histidine 90, and cysteine 96.

The protein belongs to the transcriptional regulatory CopG/NikR family. It depends on Ni(2+) as a cofactor.

Transcriptional regulator. This Haloarcula marismortui (strain ATCC 43049 / DSM 3752 / JCM 8966 / VKM B-1809) (Halobacterium marismortui) protein is Putative nickel-responsive regulator.